Reading from the N-terminus, the 345-residue chain is Cytoplasmic envelopment protein 2 (345 aa).

The segment at 26-35 (KLVGKSRKHR) is nuclear localization signal 1. A nuclear export signal region spans residues 55-63 (CILCQLLLL). The nuclear localization signal 2 stretch occupies residues 90–94 (RRRRR).

Belongs to the herpesviridae cytoplasmic envelopment protein 2 family. In terms of assembly, interacts with cytoplasmic envelopment protein 3 and with the capsid. Interacts with host STING1; this interaction prevents viral DNA-triggered antiviral immune response.

It is found in the virion tegument. The protein localises to the host cytoplasm. Its subcellular location is the host nucleus. Plays a critical role in cytoplasmic virus egress. Participates in the final step of tegumentation and envelope acquisition within the host cytoplasm by directly interacting with the capsid. Upon virion binding to target cell, a signaling cascade is triggered to disrupt the interaction with the capsid, thereby preparing capsid uncoating. Additionally, antagonizes the viral DNA-triggered antiviral immune response by targeting host STING1 and preventing its dimerization and trafficking. The sequence is that of Cytoplasmic envelopment protein 2 (UL94) from Human cytomegalovirus (strain AD169) (HHV-5).